Reading from the N-terminus, the 334-residue chain is Holliday junction branch migration complex subunit RuvB (334 aa).

The tract at residues 1 to 182 (MNERMVDQSM…FGVHLRLEYY (182 aa)) is large ATPase domain (RuvB-L). ATP is bound by residues leucine 21, arginine 22, glycine 63, lysine 66, threonine 67, threonine 68, 129–131 (EDF), arginine 172, tyrosine 182, and arginine 219. Threonine 67 lines the Mg(2+) pocket. Residues 183–253 (NESDLKEIII…TTKHALGLLQ (71 aa)) form a small ATPAse domain (RuvB-S) region. A head domain (RuvB-H) region spans residues 256 to 334 (QHGLDYIDHK…HFAKSNEERE (79 aa)). Positions 292, 311, and 316 each coordinate DNA.

Belongs to the RuvB family. In terms of assembly, homohexamer. Forms an RuvA(8)-RuvB(12)-Holliday junction (HJ) complex. HJ DNA is sandwiched between 2 RuvA tetramers; dsDNA enters through RuvA and exits via RuvB. An RuvB hexamer assembles on each DNA strand where it exits the tetramer. Each RuvB hexamer is contacted by two RuvA subunits (via domain III) on 2 adjacent RuvB subunits; this complex drives branch migration. In the full resolvosome a probable DNA-RuvA(4)-RuvB(12)-RuvC(2) complex forms which resolves the HJ.

Its subcellular location is the cytoplasm. It catalyses the reaction ATP + H2O = ADP + phosphate + H(+). In terms of biological role, the RuvA-RuvB-RuvC complex processes Holliday junction (HJ) DNA during genetic recombination and DNA repair, while the RuvA-RuvB complex plays an important role in the rescue of blocked DNA replication forks via replication fork reversal (RFR). RuvA specifically binds to HJ cruciform DNA, conferring on it an open structure. The RuvB hexamer acts as an ATP-dependent pump, pulling dsDNA into and through the RuvAB complex. RuvB forms 2 homohexamers on either side of HJ DNA bound by 1 or 2 RuvA tetramers; 4 subunits per hexamer contact DNA at a time. Coordinated motions by a converter formed by DNA-disengaged RuvB subunits stimulates ATP hydrolysis and nucleotide exchange. Immobilization of the converter enables RuvB to convert the ATP-contained energy into a lever motion, pulling 2 nucleotides of DNA out of the RuvA tetramer per ATP hydrolyzed, thus driving DNA branch migration. The RuvB motors rotate together with the DNA substrate, which together with the progressing nucleotide cycle form the mechanistic basis for DNA recombination by continuous HJ branch migration. Branch migration allows RuvC to scan DNA until it finds its consensus sequence, where it cleaves and resolves cruciform DNA. The chain is Holliday junction branch migration complex subunit RuvB from Staphylococcus aureus (strain bovine RF122 / ET3-1).